Here is a 240-residue protein sequence, read N- to C-terminus: Pyridoxine 5'-phosphate synthase (240 aa).

Asn-6 is a binding site for 3-amino-2-oxopropyl phosphate. 1-deoxy-D-xylulose 5-phosphate is bound at residue 8–9; it reads DH. Residue Arg-17 participates in 3-amino-2-oxopropyl phosphate binding. His-42 (proton acceptor) is an active-site residue. 1-deoxy-D-xylulose 5-phosphate contacts are provided by Arg-44 and His-49. Residue Glu-69 is the Proton acceptor of the active site. Residue Thr-99 coordinates 1-deoxy-D-xylulose 5-phosphate. His-190 (proton donor) is an active-site residue. 3-amino-2-oxopropyl phosphate is bound by residues Gly-191 and 212-213; that span reads GH.

It belongs to the PNP synthase family. Homooctamer; tetramer of dimers.

The protein resides in the cytoplasm. The catalysed reaction is 3-amino-2-oxopropyl phosphate + 1-deoxy-D-xylulose 5-phosphate = pyridoxine 5'-phosphate + phosphate + 2 H2O + H(+). Its pathway is cofactor biosynthesis; pyridoxine 5'-phosphate biosynthesis; pyridoxine 5'-phosphate from D-erythrose 4-phosphate: step 5/5. Catalyzes the complicated ring closure reaction between the two acyclic compounds 1-deoxy-D-xylulose-5-phosphate (DXP) and 3-amino-2-oxopropyl phosphate (1-amino-acetone-3-phosphate or AAP) to form pyridoxine 5'-phosphate (PNP) and inorganic phosphate. This Pseudomonas entomophila (strain L48) protein is Pyridoxine 5'-phosphate synthase.